The chain runs to 216 residues: ADP-sugar pyrophosphatase (216 aa).

The residue at position 1 (M1) is an N-acetylmethionine. Phosphoserine is present on residues S3 and S10. W28 provides a ligand contact to substrate. Residue K42 forms a Glycyl lysine isopeptide (Lys-Gly) (interchain with G-Cter in SUMO2) linkage. T45 is subject to Phosphothreonine. Substrate-binding positions include 46-47 (WE) and R51. In terms of domain architecture, Nudix hydrolase spans 57-194 (QTADGVAVIP…EEHLTVDARV (138 aa)). Residue Y74 is modified to Phosphotyrosine. R84 is a binding site for substrate. Residue A96 coordinates Mg(2+). The Nudix box motif lies at 97–118 (GLIDDGETPEAAALRELEEETG). Position 98 (L98) interacts with substrate. E112 and E116 together coordinate Mg(2+). D133 is a substrate binding site. Position 163 (E163) interacts with Mg(2+). K207 and K215 each carry N6-acetyllysine.

This sequence belongs to the Nudix hydrolase family. In terms of assembly, homodimer. Interacts with PARG. Mg(2+) is required as a cofactor. In terms of processing, phosphorylation at Thr-45 is required for homodimer stability; dephosphorylation results in destabilization of the homodimer. Dephosphorylation at Thr-45 promotes the ATP-synthesis activity.

It is found in the nucleus. It carries out the reaction D-ribose 5-phosphate + ATP + H(+) = ADP-D-ribose + diphosphate. It catalyses the reaction ADP-D-ribose + H2O = D-ribose 5-phosphate + AMP + 2 H(+). The catalysed reaction is 8-oxo-dGDP + H2O = 8-oxo-dGMP + phosphate + H(+). Its function is as follows. Enzyme that can either act as an ADP-sugar pyrophosphatase in absence of diphosphate or catalyze the synthesis of ATP in presence of diphosphate. In absence of diphosphate, hydrolyzes with similar activities various modified nucleoside diphosphates such as ADP-ribose, ADP-mannose, ADP-glucose, 8-oxo-GDP and 8-oxo-dGDP. Can also hydrolyze other nucleotide sugars with low activity. In presence of diphosphate, mediates the synthesis of ATP in the nucleus by catalyzing the conversion of ADP-ribose to ATP and ribose 5-phosphate. Nuclear ATP synthesis takes place when dephosphorylated at Thr-45. Nuclear ATP generation is required for extensive chromatin remodeling events that are energy-consuming. Does not play a role in U8 snoRNA decapping activity. Binds U8 snoRNA. The polypeptide is ADP-sugar pyrophosphatase (Pongo abelii (Sumatran orangutan)).